A 551-amino-acid polypeptide reads, in one-letter code: Protein GPR107 (551 aa).

An N-terminal signal peptide occupies residues 1–33 (MAVPVPLGRFGSFCLRLLRLLALLELLVHPVLG). The Extracellular segment spans residues 40–262 (LKDDVRHKVH…YLSAGEIPLP (223 aa)). 2 N-linked (GlcNAc...) asparagine glycosylation sites follow: Asn-64 and Asn-209. Cys-106 and Cys-226 are oxidised to a cystine. The chain crosses the membrane as a helical span at residues 263-283 (KLYVSMALFFFLSGTIWIHIL). Residues 284-292 (RKRRNDVFK) lie on the Cytoplasmic side of the membrane. Residues 293–313 (IHWLMAALPFTKSLSLVFHAI) form a helical membrane-spanning segment. The Extracellular portion of the chain corresponds to 314–336 (DYHYISSQGFPIEGWAVVYYITH). A helical membrane pass occupies residues 337–357 (LLKGALLFITIALIGTGWAFI). Residues 358 to 367 (KHILSDKDKK) lie on the Cytoplasmic side of the membrane. A helical transmembrane segment spans residues 368–388 (IFMIVIPLQVLANVAYIIIES). The Extracellular portion of the chain corresponds to 389–401 (TEEGTTEYGLWKD). The helical transmembrane segment at 402–422 (SLFLVDLLCCGAILFPVVWSI) threads the bilayer. The Cytoplasmic portion of the chain corresponds to 423 to 449 (RHLQEASATDGKAAINLAKLRLFRHYY). A helical membrane pass occupies residues 450-470 (VLIVCYIYFTRIIAFLLKFAV). Residues 471 to 475 (PFQWK) lie on the Extracellular side of the membrane. A helical transmembrane segment spans residues 476 to 495 (WLYQLLDETATLVFFVLTGY). Residues 496-551 (KFRPASDNPYLQLSQEDDDLEMESVVTTSGVMENMKKVKKVSNGAVEPQGSWEGTA) are Cytoplasmic-facing. Ser-537 is subject to Phosphoserine.

It belongs to the LU7TM family. Cleaved by FURIN to yield two fragments that remain associated via a disulfide bond.

Its subcellular location is the cell membrane. The protein resides in the golgi apparatus. The protein localises to the trans-Golgi network membrane. Its function is as follows. Has been proposed to act as a receptor for neuronostatin, a peptide derived from the somatostatin/SST precursor. Involved in blood sugar regulation through the induction of glucagon in response to low glucose. The protein is Protein GPR107 (Gpr107) of Mus musculus (Mouse).